The following is a 219-amino-acid chain: Ribosomal RNA small subunit methyltransferase G (219 aa).

S-adenosyl-L-methionine contacts are provided by residues Gly-85, Leu-90, 136 to 137 (VE), and Arg-151.

Belongs to the methyltransferase superfamily. RNA methyltransferase RsmG family.

The protein resides in the cytoplasm. The catalysed reaction is guanosine(527) in 16S rRNA + S-adenosyl-L-methionine = N(7)-methylguanosine(527) in 16S rRNA + S-adenosyl-L-homocysteine. Specifically methylates the N7 position of guanine in position 527 of 16S rRNA. The polypeptide is Ribosomal RNA small subunit methyltransferase G (Cellvibrio japonicus (strain Ueda107) (Pseudomonas fluorescens subsp. cellulosa)).